An 86-amino-acid chain; its full sequence is uncharacterized protein (86 aa).

This is an uncharacterized protein from Sus scrofa (Pig).